Reading from the N-terminus, the 84-residue chain is Small ribosomal subunit protein bS18B (84 aa).

The protein belongs to the bacterial ribosomal protein bS18 family. Part of the 30S ribosomal subunit. Forms a tight heterodimer with protein bS6.

In terms of biological role, binds as a heterodimer with protein bS6 to the central domain of the 16S rRNA, where it helps stabilize the platform of the 30S subunit. This Mycolicibacterium smegmatis (strain ATCC 700084 / mc(2)155) (Mycobacterium smegmatis) protein is Small ribosomal subunit protein bS18B.